A 653-amino-acid chain; its full sequence is MASGSKASVPADSFRTISPDRRGEKSASAVSGDTAAATTLKGTAIPVRSVVASPRPVKGKAGRETARLRLQRLPAAQAEDTGEAAAAAAEEPLLPVPEDEEEAQPLPPVCVSRMRGMWRDEKVSLYCDEVLQDCKAEDADEVMGKYLSEKLKLKDKWLGVWKTNPSVFFVKYEEASIPFVGILVEVTCEPYQDSSSRFKVTVSVAEPFSSNIANIPRDLVDEILEELEHSVPLLEVYPVEGQDTDIHVIALALEVVRFFYDFLWRDWDDEESCENYTALIEERINLWCDIQDGTIPGPIAQRFKKTLEKYKNKRVELIEYQSNIKEDPSAAEAVECWKKYYEIVMLCGLLKMWEDLRLRVHGPFFPRILRRRKGKREFGKTITHIVAKMMTTEMIKDLSSDTLLQQHGDLDLALDNCYSGDTVIIFPGEYQAANLALLTDDIIIKGVGKREEIMITSEPSRDSFVVSKADNVKLMHLSLIQQGTVDGIVVVESGHMTLENCILKCEGTGVCVLTGAALTITDSEITGAQGAGVELYPGSIAILERNEIHHCNNLRTSNSSKSTLGGVNMKVLPAPKLKMTNNHIYSNKGYGVSILQPMEQFFIVAEEALNKRASSGDKKDDKMLFKVMQNLNLEMNNNKIEANVKGDIRIVTS.

Residues 1–65 are disordered; the sequence is MASGSKASVP…PVKGKAGRET (65 aa). Serine 8 is modified (phosphoserine). Polar residues predominate over residues 28-41; the sequence is SAVSGDTAAATTLK. Low complexity predominate over residues 46 to 56; that stretch reads PVRSVVASPRP. At serine 53 the chain carries Phosphoserine. Residues 299–326 are a coiled coil; that stretch reads IAQRFKKTLEKYKNKRVELIEYQSNIKE. 4 PbH1 repeats span residues 493-514, 515-537, 538-571, and 574-596; these read SGHM…CVLT, GAAL…ELYP, GSIA…NMKV, and APKL…SILQ. At lysine 570 the chain carries N6-acetyllysine. At lysine 645 the chain carries N6-acetyllysine.

Interacts with HSPA2; this interaction may promote the recruitment of HSPA2 to the spindle. Expressed in spermatocytes and elongating spermatids inside the seminiferous tubules (at protein level). Testis-specific.

Its subcellular location is the cytoplasm. The protein resides in the cytoskeleton. The protein localises to the spindle. Functionally, testis-specific spindle-associated factor that plays a role in spermatogenesis. In association with HSPA2, participates in the maintenance of spindle integrity during meiosis in male germ cells. The polypeptide is Testicular spindle-associated protein SHCBP1L (Homo sapiens (Human)).